The following is a 434-amino-acid chain: Glutamyl-tRNA reductase (434 aa).

Residues 57 to 60 (TCNR), Ser-116, 121 to 123 (ETQ), and Gln-127 contribute to the substrate site. Cys-58 (nucleophile) is an active-site residue. An NADP(+)-binding site is contributed by 196-201 (GAGEMI).

Belongs to the glutamyl-tRNA reductase family. In terms of assembly, homodimer.

The catalysed reaction is (S)-4-amino-5-oxopentanoate + tRNA(Glu) + NADP(+) = L-glutamyl-tRNA(Glu) + NADPH + H(+). The protein operates within porphyrin-containing compound metabolism; protoporphyrin-IX biosynthesis; 5-aminolevulinate from L-glutamyl-tRNA(Glu): step 1/2. Functionally, catalyzes the NADPH-dependent reduction of glutamyl-tRNA(Glu) to glutamate 1-semialdehyde (GSA). In Burkholderia pseudomallei (strain 1106a), this protein is Glutamyl-tRNA reductase.